The sequence spans 492 residues: Cytochrome P450 monooxygenase rdc4 (492 aa).

Cysteine 435 provides a ligand contact to heme.

The protein belongs to the cytochrome P450 family. The cofactor is heme.

The protein operates within secondary metabolite biosynthesis. Functionally, cytochrome P450 monooxygenase; part of the gene cluster that mediates the biosynthesis of radicicol, a resorcylic acid lactone (RAL) that irreversibly inhibits the HSP90 molecular chaperone, an important target for cancer chemotherapy. The radicicol cluster encodes only two apparent post-PKS enzymes, a cytochrome P450 monooxygenase (rdc4) and a non-heme halogenase (rdc2) that could introduce the epoxide and the chlorine, respectively. If this cluster includes all the genes required for radicicol biosynthesis, the remaining structural features of radicicol are presumably generated by the PKSs rdc1 and rdc5. The C-2' ketone could arise if the R-PKS rdc5 and NR-PKS rdc1 each carry out four iterations, in contrast to the five iteration-three iteration split for the hypothemycin PKSs. The origin of the cis 5',6' double bond is not known. The radicicol R-PKS rdc5 ER domain may catalyze either double bond isomerization or reduction in the third iteration. The polypeptide is Cytochrome P450 monooxygenase rdc4 (Metacordyceps chlamydosporia (Nematophagous fungus)).